The following is a 267-amino-acid chain: tRNA pseudouridine synthase A (267 aa).

Asp-51 (nucleophile) is an active-site residue. Tyr-109 is a substrate binding site.

Belongs to the tRNA pseudouridine synthase TruA family. In terms of assembly, homodimer.

It catalyses the reaction uridine(38/39/40) in tRNA = pseudouridine(38/39/40) in tRNA. Its function is as follows. Formation of pseudouridine at positions 38, 39 and 40 in the anticodon stem and loop of transfer RNAs. This is tRNA pseudouridine synthase A from Staphylococcus epidermidis (strain ATCC 35984 / DSM 28319 / BCRC 17069 / CCUG 31568 / BM 3577 / RP62A).